A 300-amino-acid chain; its full sequence is MKLFLLAAAAFSAPALTVSELNHIKSLNPRWKAGIPKRFEGLTKDEISSLLMPVSFLKNAKGAAPRGTFTDKDDVPESFDFREEYPHCIPEVVDQGGCGSCWAFSSVATFGDRRCVAGLDKKPVKYSPQYVVSCDHGDMACNGGWLPNVWKFLTKTGTTTDECVPYKSGSTTLRGTCPTKCADGSSKVHLATATSYKDYGLDIPAMMKALSTSGPLQVAFLVHSDFMYYESGVYQHTYGYMEGGHAVEMVGYGTDDDGVDYWIIKNSWGPDWGEDGYFRMIRGINDCSIEEQAYAGFFDE.

The first 19 residues, 1 to 19, serve as a signal peptide directing secretion; it reads MKLFLLAAAAFSAPALTVS. Cystine bridges form between C88/C115, C98/C141, and C134/C177. C101 is an active-site residue. Catalysis depends on residues H245 and N266.

This sequence belongs to the peptidase C1 family.

The protein localises to the vacuole. Thiol protease which is required for parasite excystation and invasion of the proximal small intestine of the human host. The sequence is that of Cathepsin B-like CP2 (CP2) from Giardia intestinalis (Giardia lamblia).